Reading from the N-terminus, the 200-residue chain is Probable molybdenum cofactor guanylyltransferase (200 aa).

GTP contacts are provided by residues 9 to 11 (LAG), K21, D69, and D100. D100 serves as a coordination point for Mg(2+).

This sequence belongs to the MobA family. The cofactor is Mg(2+).

It localises to the cytoplasm. The catalysed reaction is Mo-molybdopterin + GTP + H(+) = Mo-molybdopterin guanine dinucleotide + diphosphate. Functionally, transfers a GMP moiety from GTP to Mo-molybdopterin (Mo-MPT) cofactor (Moco or molybdenum cofactor) to form Mo-molybdopterin guanine dinucleotide (Mo-MGD) cofactor. The polypeptide is Probable molybdenum cofactor guanylyltransferase (Bacillus cereus (strain AH820)).